A 198-amino-acid polypeptide reads, in one-letter code: ATP-dependent Clp protease proteolytic subunit (198 aa).

Ser-101 (nucleophile) is an active-site residue. Residue His-126 is part of the active site.

It belongs to the peptidase S14 family. In terms of assembly, component of the chloroplastic Clp protease core complex.

Its subcellular location is the plastid. The protein localises to the chloroplast stroma. It carries out the reaction Hydrolysis of proteins to small peptides in the presence of ATP and magnesium. alpha-casein is the usual test substrate. In the absence of ATP, only oligopeptides shorter than five residues are hydrolyzed (such as succinyl-Leu-Tyr-|-NHMec, and Leu-Tyr-Leu-|-Tyr-Trp, in which cleavage of the -Tyr-|-Leu- and -Tyr-|-Trp bonds also occurs).. In terms of biological role, cleaves peptides in various proteins in a process that requires ATP hydrolysis. Has a chymotrypsin-like activity. Plays a major role in the degradation of misfolded proteins. This chain is ATP-dependent Clp protease proteolytic subunit, found in Solanum bulbocastanum (Wild potato).